The sequence spans 245 residues: Leucyl/phenylalanyl-tRNA--protein transferase (245 aa).

This sequence belongs to the L/F-transferase family.

It localises to the cytoplasm. It carries out the reaction N-terminal L-lysyl-[protein] + L-leucyl-tRNA(Leu) = N-terminal L-leucyl-L-lysyl-[protein] + tRNA(Leu) + H(+). The enzyme catalyses N-terminal L-arginyl-[protein] + L-leucyl-tRNA(Leu) = N-terminal L-leucyl-L-arginyl-[protein] + tRNA(Leu) + H(+). The catalysed reaction is L-phenylalanyl-tRNA(Phe) + an N-terminal L-alpha-aminoacyl-[protein] = an N-terminal L-phenylalanyl-L-alpha-aminoacyl-[protein] + tRNA(Phe). Its function is as follows. Functions in the N-end rule pathway of protein degradation where it conjugates Leu, Phe and, less efficiently, Met from aminoacyl-tRNAs to the N-termini of proteins containing an N-terminal arginine or lysine. The protein is Leucyl/phenylalanyl-tRNA--protein transferase of Paraburkholderia phytofirmans (strain DSM 17436 / LMG 22146 / PsJN) (Burkholderia phytofirmans).